The chain runs to 111 residues: Universal stress protein B (111 aa).

2 consecutive transmembrane segments (helical) span residues Met-1–Arg-21 and Phe-90–Trp-110.

This sequence belongs to the universal stress protein B family.

Its subcellular location is the cell inner membrane. This chain is Universal stress protein B, found in Escherichia fergusonii (strain ATCC 35469 / DSM 13698 / CCUG 18766 / IAM 14443 / JCM 21226 / LMG 7866 / NBRC 102419 / NCTC 12128 / CDC 0568-73).